The following is a 139-amino-acid chain: MSSQPSKALETFDNPTPGRDFHIHMEIPEFTCLCPKTGQPDFAVLYLDYIPDQKCVELKSLKLYIWSFRDEGCFHEAVTNQILDDLVVATDPKFMRLTAKFYVRGGIFTNVVAEHRKPGWQPQPRVELAEFESQSNIRG.

Cys-34 functions as the Thioimide intermediate in the catalytic mechanism. Asp-41 acts as the Proton donor in catalysis. Substrate is bound by residues 56–58 (VEL) and 75–76 (HE).

It belongs to the GTP cyclohydrolase I family. QueF type 1 subfamily.

The protein localises to the cytoplasm. The catalysed reaction is 7-aminomethyl-7-carbaguanine + 2 NADP(+) = 7-cyano-7-deazaguanine + 2 NADPH + 3 H(+). Its pathway is tRNA modification; tRNA-queuosine biosynthesis. In terms of biological role, catalyzes the NADPH-dependent reduction of 7-cyano-7-deazaguanine (preQ0) to 7-aminomethyl-7-deazaguanine (preQ1). The chain is NADPH-dependent 7-cyano-7-deazaguanine reductase from Methylobacillus flagellatus (strain ATCC 51484 / DSM 6875 / VKM B-1610 / KT).